The sequence spans 800 residues: Mitochondrial intermediate peptidase (800 aa).

The N-terminal 23 residues, 1–23 (MAGHMLMPLRRRPWTCRACLQRL), are a transit peptide targeting the mitochondrion. The span at 27–41 (RRSLETAASPSSQSD) shows a compositional bias: polar residues. The tract at residues 27-59 (RRSLETAASPSSQSDVYDYAPTNHSTQKKSNDE) is disordered. His563 provides a ligand contact to Zn(2+). The active site involves Glu564. 2 residues coordinate Zn(2+): His567 and His570.

It belongs to the peptidase M3 family. The cofactor is Zn(2+).

It localises to the mitochondrion matrix. It catalyses the reaction Release of an N-terminal octapeptide as second stage of processing of some proteins imported into the mitochondrion.. Its function is as follows. Cleaves proteins, imported into the mitochondrion, to their mature size. While most mitochondrial precursor proteins are processed to the mature form in one step by mitochondrial processing peptidase (MPP), the sequential cleavage by MIP of an octapeptide after initial processing by MPP is a required step for a subgroup of nuclear-encoded precursor proteins destined for the matrix or the inner membrane. This Aspergillus oryzae (strain ATCC 42149 / RIB 40) (Yellow koji mold) protein is Mitochondrial intermediate peptidase (oct1).